The sequence spans 147 residues: Urease accessory protein UreE (147 aa).

This sequence belongs to the UreE family.

It is found in the cytoplasm. In terms of biological role, involved in urease metallocenter assembly. Binds nickel. Probably functions as a nickel donor during metallocenter assembly. The sequence is that of Urease accessory protein UreE from Nostoc sp. (strain PCC 7120 / SAG 25.82 / UTEX 2576).